Consider the following 401-residue polypeptide: Elongation factor Tu 1 (401 aa).

One can recognise a tr-type G domain in the interval Lys10–Val209. The segment at Gly19–Thr26 is G1. Residue Gly19–Thr26 coordinates GTP. Thr26 serves as a coordination point for Mg(2+). A G2 region spans residues Gly60–Ala64. Residues Asp81–Gly84 form a G3 region. GTP is bound by residues Asp81–His85 and Asn136–Asp139. The G4 stretch occupies residues Asn136–Asp139. Positions Ser174–Leu176 are G5.

It belongs to the TRAFAC class translation factor GTPase superfamily. Classic translation factor GTPase family. EF-Tu/EF-1A subfamily. Monomer.

It is found in the cytoplasm. It carries out the reaction GTP + H2O = GDP + phosphate + H(+). GTP hydrolase that promotes the GTP-dependent binding of aminoacyl-tRNA to the A-site of ribosomes during protein biosynthesis. The chain is Elongation factor Tu 1 from Roseiflexus sp. (strain RS-1).